A 434-amino-acid polypeptide reads, in one-letter code: MSILKVHAREIFDSRGNPTVEVDLFTAKGLFRAAVPSGASTGIYEALELRDNDKTRYMGKGVSKAVEHINKTIAPALVSKKLNVVEQEKIDKLMIEMDGTENKSKFGANAILGVSLAVCKAGAVEKGVPLYRHIADLAGNAEVILPVPAFNVINGGSHAGNKLAMQEFMILPVGAENFREAMRIGAEVYHNLKNVIKEKYGKDATNVGDEGGFAPNILENKEALELLKNAIGKAGYSDKVVIGMDVAASEFYRSGKYDLDFKSPDDPSRYITPDELANLYKSFIRDYPVVSIEDPFDQDDWEAWQKFTASAGIQVVGDDLTVTNPKRIAKAVSEKSCNCLLLKVNQIGSVTESLQACKLAQSNGWGVMVSHRSGETEDTFIADLVVGLCTGQIKTVAPCRSERLAKYNQILRIEEELGSKAKFAGRSFRNPLAK.

Residue serine 2 is modified to N-acetylserine. Lysine 5 carries the N6-acetyllysine modification. Serine 40 is a binding site for Mg(2+). Tyrosine 44 carries the phosphotyrosine modification. Lysine 60 carries the N6-acetyllysine; alternate modification. Lysine 60 is subject to N6-succinyllysine; alternate. Residues lysine 64 and lysine 71 each carry the N6-acetyllysine modification. Position 89 is an N6-acetyllysine; alternate (lysine 89). The residue at position 89 (lysine 89) is an N6-succinyllysine; alternate. N6-acetyllysine occurs at positions 92 and 126. 2 residues coordinate substrate: histidine 158 and glutamate 167. An N6-acetyllysine mark is found at lysine 193 and lysine 199. Lysine 202 carries the N6-acetyllysine; alternate modification. Lysine 202 participates in a covalent cross-link: Glycyl lysine isopeptide (Lys-Gly) (interchain with G-Cter in SUMO2); alternate. The active-site Proton donor is the glutamate 210. N6-acetyllysine; alternate is present on residues lysine 228 and lysine 233. At lysine 228 the chain carries N6-succinyllysine; alternate. Lysine 228 carries the N6-(2-hydroxyisobutyryl)lysine; alternate modification. N6-malonyllysine; alternate is present on lysine 233. Aspartate 245 lines the Mg(2+) pocket. Serine 254 carries the phosphoserine modification. Position 256 is an N6-acetyllysine (lysine 256). The residue at position 263 (serine 263) is a Phosphoserine. Lysine 281 is modified (N6-acetyllysine; alternate). At lysine 281 the chain carries N6-(2-hydroxyisobutyryl)lysine; alternate. Tyrosine 287 is subject to Phosphotyrosine. Serine 291 is subject to Phosphoserine. 2 residues coordinate Mg(2+): glutamate 293 and aspartate 318. Glutamate 293 and aspartate 318 together coordinate substrate. N6-acetyllysine occurs at positions 335 and 343. Lysine 343 (proton acceptor) is an active-site residue. Substrate is bound by residues 370-373 (SHRS) and lysine 394. Residues 405–434 (AKYNQILRIEEELGSKAKFAGRSFRNPLAK) form a required for interaction with PLG region. Lysine 406 carries the N6-acetyllysine modification. Lysine 420 bears the N6-acetyllysine; alternate mark. Position 420 is an N6-succinyllysine; alternate (lysine 420). Lysine 420 carries the N6-malonyllysine; alternate modification.

Belongs to the enolase family. In terms of assembly, mammalian enolase is composed of 3 isozyme subunits, alpha, beta and gamma, which can form homodimers or heterodimers which are cell-type and development-specific. ENO1 interacts with PLG in the neuronal plasma membrane and promotes its activation. The C-terminal lysine is required for this binding. Interacts with ENO4 and PGAM2. Interacts with CMTM6. Mg(2+) serves as cofactor. In terms of processing, ISGylated. Post-translationally, lysine 2-hydroxyisobutyrylation (Khib) by p300/EP300 activates the phosphopyruvate hydratase activity. The alpha/alpha homodimer is expressed in embryo and in most adult tissues. The alpha/beta heterodimer and the beta/beta homodimer are found in striated muscle, and the alpha/gamma heterodimer and the gamma/gamma homodimer in neurons.

It localises to the cytoplasm. The protein resides in the cell membrane. The enzyme catalyses (2R)-2-phosphoglycerate = phosphoenolpyruvate + H2O. Its pathway is carbohydrate degradation; glycolysis; pyruvate from D-glyceraldehyde 3-phosphate: step 4/5. In terms of biological role, glycolytic enzyme the catalyzes the conversion of 2-phosphoglycerate to phosphoenolpyruvate. In addition to glycolysis, involved in various processes such as growth control, hypoxia tolerance and allergic responses. May also function in the intravascular and pericellular fibrinolytic system due to its ability to serve as a receptor and activator of plasminogen on the cell surface of several cell-types such as leukocytes and neurons. Stimulates immunoglobulin production. The chain is Alpha-enolase (ENO1) from Bos taurus (Bovine).